A 344-amino-acid polypeptide reads, in one-letter code: tRNA(Ile)-lysidine synthase (344 aa).

Residue 30-35 (SGGQDS) coordinates ATP. Positions 323–344 (PPPPAPVPPDPGERSPPPSPLY) are disordered.

The protein belongs to the tRNA(Ile)-lysidine synthase family.

It localises to the cytoplasm. It carries out the reaction cytidine(34) in tRNA(Ile2) + L-lysine + ATP = lysidine(34) in tRNA(Ile2) + AMP + diphosphate + H(+). Ligates lysine onto the cytidine present at position 34 of the AUA codon-specific tRNA(Ile) that contains the anticodon CAU, in an ATP-dependent manner. Cytidine is converted to lysidine, thus changing the amino acid specificity of the tRNA from methionine to isoleucine. In Thermosynechococcus vestitus (strain NIES-2133 / IAM M-273 / BP-1), this protein is tRNA(Ile)-lysidine synthase.